We begin with the raw amino-acid sequence, 72 residues long: METQKLISMVKEALEKYQYPLTAKNIKVVIQKEHNVILPTGSINSILYSNPELFEKIDKTNTIYPPLWIRKN.

This sequence belongs to the asfivirus I73R family.

Its subcellular location is the virion. This is an uncharacterized protein from Ornithodoros (relapsing fever ticks).